The sequence spans 155 residues: Small ribosomal subunit protein uS7 (155 aa).

It belongs to the universal ribosomal protein uS7 family. Part of the 30S ribosomal subunit. Contacts proteins S9 and S11.

Its function is as follows. One of the primary rRNA binding proteins, it binds directly to 16S rRNA where it nucleates assembly of the head domain of the 30S subunit. Is located at the subunit interface close to the decoding center, probably blocks exit of the E-site tRNA. In Ureaplasma parvum serovar 3 (strain ATCC 27815 / 27 / NCTC 11736), this protein is Small ribosomal subunit protein uS7.